Consider the following 271-residue polypeptide: Elongation factor Ts (271 aa).

The segment at 76–79 is involved in Mg(2+) ion dislocation from EF-Tu; the sequence is TDFV.

It belongs to the EF-Ts family.

It is found in the cytoplasm. Functionally, associates with the EF-Tu.GDP complex and induces the exchange of GDP to GTP. It remains bound to the aminoacyl-tRNA.EF-Tu.GTP complex up to the GTP hydrolysis stage on the ribosome. The chain is Elongation factor Ts from Mycolicibacterium vanbaalenii (strain DSM 7251 / JCM 13017 / BCRC 16820 / KCTC 9966 / NRRL B-24157 / PYR-1) (Mycobacterium vanbaalenii).